Here is a 114-residue protein sequence, read N- to C-terminus: Putative neurotoxin 7 (114 aa).

It belongs to the scolopendra neurotoxin 8 family. In terms of processing, contains 3 disulfide bonds. In terms of tissue distribution, expressed by the venom gland.

Its subcellular location is the secreted. In Scolopendra mutilans (Chinese red-headed centipede), this protein is Putative neurotoxin 7.